The following is a 212-amino-acid chain: Thymidylate kinase (212 aa).

ATP is bound at residue 10-17 (GLEGAGKT).

The protein belongs to the thymidylate kinase family.

It catalyses the reaction dTMP + ATP = dTDP + ADP. Functionally, phosphorylation of dTMP to form dTDP in both de novo and salvage pathways of dTTP synthesis. This is Thymidylate kinase from Baumannia cicadellinicola subsp. Homalodisca coagulata.